We begin with the raw amino-acid sequence, 313 residues long: Porphobilinogen deaminase (313 aa).

At Cys-243 the chain carries S-(dipyrrolylmethanemethyl)cysteine.

The protein belongs to the HMBS family. Monomer. Requires dipyrromethane as cofactor.

It carries out the reaction 4 porphobilinogen + H2O = hydroxymethylbilane + 4 NH4(+). The protein operates within porphyrin-containing compound metabolism; protoporphyrin-IX biosynthesis; coproporphyrinogen-III from 5-aminolevulinate: step 2/4. Its function is as follows. Tetrapolymerization of the monopyrrole PBG into the hydroxymethylbilane pre-uroporphyrinogen in several discrete steps. The polypeptide is Porphobilinogen deaminase (Bordetella petrii (strain ATCC BAA-461 / DSM 12804 / CCUG 43448)).